The sequence spans 191 residues: Thymidine kinase (191 aa).

ATP is bound by residues 15–22 (GPMYSGKT) and 88–91 (DEAQ). Glu89 acts as the Proton acceptor in catalysis. Zn(2+) contacts are provided by Cys145, Cys148, Cys183, and Cys186.

This sequence belongs to the thymidine kinase family. As to quaternary structure, homotetramer.

The protein resides in the cytoplasm. The enzyme catalyses thymidine + ATP = dTMP + ADP + H(+). This chain is Thymidine kinase, found in Clostridium botulinum (strain Hall / ATCC 3502 / NCTC 13319 / Type A).